The primary structure comprises 343 residues: tRNA N6-adenosine threonylcarbamoyltransferase (343 aa).

Fe cation-binding residues include His120 and His124. Substrate is bound by residues 142 to 146 (VVSGG), Asp175, Gly188, Asp192, and Asn281. Asp310 contributes to the Fe cation binding site.

Belongs to the KAE1 / TsaD family. Fe(2+) serves as cofactor.

It is found in the cytoplasm. It carries out the reaction L-threonylcarbamoyladenylate + adenosine(37) in tRNA = N(6)-L-threonylcarbamoyladenosine(37) in tRNA + AMP + H(+). Functionally, required for the formation of a threonylcarbamoyl group on adenosine at position 37 (t(6)A37) in tRNAs that read codons beginning with adenine. Is involved in the transfer of the threonylcarbamoyl moiety of threonylcarbamoyl-AMP (TC-AMP) to the N6 group of A37, together with TsaE and TsaB. TsaD likely plays a direct catalytic role in this reaction. The chain is tRNA N6-adenosine threonylcarbamoyltransferase from Bacillus anthracis.